The primary structure comprises 275 residues: Large ribosomal subunit protein uL2 (275 aa).

The segment at 224–257 is disordered; that stretch reads AMNPIDHPHGGGEGRTAAGRDPVSPWGTPTKGFR.

The protein belongs to the universal ribosomal protein uL2 family. Part of the 50S ribosomal subunit. Forms a bridge to the 30S subunit in the 70S ribosome.

Its function is as follows. One of the primary rRNA binding proteins. Required for association of the 30S and 50S subunits to form the 70S ribosome, for tRNA binding and peptide bond formation. It has been suggested to have peptidyltransferase activity; this is somewhat controversial. Makes several contacts with the 16S rRNA in the 70S ribosome. This Burkholderia mallei (strain NCTC 10247) protein is Large ribosomal subunit protein uL2.